The chain runs to 303 residues: Sulfate adenylyltransferase subunit 2 (303 aa).

The protein belongs to the PAPS reductase family. CysD subfamily. As to quaternary structure, heterodimer composed of CysD, the smaller subunit, and CysN.

The enzyme catalyses sulfate + ATP + H(+) = adenosine 5'-phosphosulfate + diphosphate. It participates in sulfur metabolism; hydrogen sulfide biosynthesis; sulfite from sulfate: step 1/3. Its function is as follows. With CysN forms the ATP sulfurylase (ATPS) that catalyzes the adenylation of sulfate producing adenosine 5'-phosphosulfate (APS) and diphosphate, the first enzymatic step in sulfur assimilation pathway. APS synthesis involves the formation of a high-energy phosphoric-sulfuric acid anhydride bond driven by GTP hydrolysis by CysN coupled to ATP hydrolysis by CysD. In Sulfurimonas denitrificans (strain ATCC 33889 / DSM 1251) (Thiomicrospira denitrificans (strain ATCC 33889 / DSM 1251)), this protein is Sulfate adenylyltransferase subunit 2.